We begin with the raw amino-acid sequence, 1375 residues long: DNA-directed RNA polymerase subunit beta (1375 aa).

Belongs to the RNA polymerase beta chain family. The RNAP catalytic core consists of 2 alpha, 1 beta, 1 beta' and 1 omega subunit. When a sigma factor is associated with the core the holoenzyme is formed, which can initiate transcription.

It carries out the reaction RNA(n) + a ribonucleoside 5'-triphosphate = RNA(n+1) + diphosphate. Functionally, DNA-dependent RNA polymerase catalyzes the transcription of DNA into RNA using the four ribonucleoside triphosphates as substrates. The sequence is that of DNA-directed RNA polymerase subunit beta from Malacoplasma penetrans (strain HF-2) (Mycoplasma penetrans).